We begin with the raw amino-acid sequence, 216 residues long: Ras-related protein Rab-11A (216 aa).

Glycine 2 is modified (N-acetylglycine). GTP is bound by residues serine 20, glycine 21, valine 22, glycine 23, lysine 24, serine 25, asparagine 26, asparagine 37, leucine 38, serine 40, serine 42, and threonine 43. Serine 25 contacts Mg(2+). The Switch 1 motif lies at 36 to 47 (FNLESKSTIGVE). Mg(2+) is bound by residues threonine 43 and aspartate 66. A Switch 2 motif is present at residues 67–86 (TAGQERYRAITSAYYRGAVG). GTP-binding residues include glycine 69, asparagine 124, lysine 125, aspartate 127, alanine 155, and leucine 156. A disordered region spans residues 183–207 (DRRENDMSPSNNVVPIHVPPTTENK). S-geranylgeranyl cysteine attachment occurs at residues cysteine 212 and cysteine 213. The residue at position 213 (cysteine 213) is a Cysteine methyl ester. The propeptide at 214-216 (QNI) is removed in mature form.

The protein belongs to the small GTPase superfamily. Rab family. In terms of assembly, interacts (GTP-bound form) with RAB11FIPs (via their C-termini) including RAB11FIP1, RAB11FIP2, RAB11FIP3, RAB11FIP4 and RAB11FIP5 effectors. Forms a complex with RAB11FIP3 and dynein intermediate chain DYNC1LI1; the interaction between RAB11A1 and RAB11FIP3 is direct; the complex regulates endocytic trafficking. Interacts with EVI5; EVI5 and RAB11FIP3 may be mutually exclusive and compete for binding RAB11A. Interacts with SGSM1, SGSM2, SGSM3 and VIPAS39. Interacts with EXOC6 in a GTP-dependent manner. Interacts with RAB11FIP5. Interacts with STXBP6. Interacts (GDP-bound form) with ZFYVE27. Interacts with BIRC6/bruce. May interact with TBC1D14. Interacts with UNC119; in a cell cycle-dependent manner. GDP-bound and nucleotide-free forms interact with SH3BP5. Interacts (GDP-bound form) with KIF5A in a ZFYVE27-dependent manner. Interacts (GDP-bound form) with RELCH. Found in a complex composed of RELCH, OSBP1 and RAB11A. Interacts with TBC1D12. Interacts with DEF6. Interacts with ATP9A. Forms a heterotetramer with RAB11FIP3; the GTP-bound form is preferred for binding. Forms a complex with Rabin8/RAB3IP and RAB11FIP3, probably a heterohexamer with two of each protein subunit, where Rabin8/RAB3IP and RAB11FIP3 simultaneously bind to RAB11A; the complex promotes preciliary trafficking and cilia growth. Forms a complex containing RAB11A, ASAP1, Rabin8/RAB3IP, RAP11FIP3 and ARF4; the complex promotes preciliary trafficking; the complex binds to RHO in photoreceptor cells and promotes RHO ciliary transport. Interacts (GTP-bound form) with WDR44; the interaction prevents RAB11A-RAB3IP-RAB11FIP3 complex formation. The cofactor is Mg(2+).

The protein resides in the cell membrane. It localises to the endosome membrane. It is found in the recycling endosome membrane. Its subcellular location is the cleavage furrow. The protein localises to the cytoplasmic vesicle. The protein resides in the phagosome. It localises to the cytoplasmic vesicle membrane. It is found in the golgi apparatus. Its subcellular location is the trans-Golgi network. The catalysed reaction is GTP + H2O = GDP + phosphate + H(+). Regulated by guanine nucleotide exchange factors (GEFs) which promote the exchange of bound GDP for free GTP. Regulated by GTPase activating proteins (GAPs) which increase the GTP hydrolysis activity. Inhibited by GDP dissociation inhibitors (GDIs) which prevent Rab-GDP dissociation. In terms of biological role, the small GTPases Rab are key regulators of intracellular membrane trafficking, from the formation of transport vesicles to their fusion with membranes. Rabs cycle between an inactive GDP-bound form and an active GTP-bound form that is able to recruit to membranes different set of downstream effectors directly responsible for vesicle formation, movement, tethering and fusion. The small Rab GTPase RAB11A regulates endocytic recycling. Forms a functional Rab11/RAB11FIP3/dynein complex that regulates the movement of peripheral sorting endosomes (SE) along microtubule tracks toward the microtubule organizing center/centrosome, generating the endosomal recycling compartment (ERC). Acts as a major regulator of membrane delivery during cytokinesis. Together with MYO5B and RAB8A participates in epithelial cell polarization. Together with Rabin8/RAB3IP, RAB8A, the exocyst complex, PARD3, PRKCI, ANXA2, CDC42 and DNMBP promotes transcytosis of PODXL to the apical membrane initiation sites (AMIS), apical surface formation and lumenogenesis. Together with MYO5B participates in CFTR trafficking to the plasma membrane and TF (Transferrin) recycling in nonpolarized cells. Required in a complex with MYO5B and RAB11FIP2 for the transport of NPC1L1 to the plasma membrane. Participates in the sorting and basolateral transport of CDH1 from the Golgi apparatus to the plasma membrane. Regulates the recycling of FCGRT (receptor of Fc region of monomeric IgG) to basolateral membranes. May also play a role in melanosome transport and release from melanocytes. Promotes Rabin8/RAB3IP preciliary vesicular trafficking to mother centriole by forming a ciliary targeting complex containing Rab11, ASAP1, Rabin8/RAB3IP, RAB11FIP3 and ARF4, thereby regulating ciliogenesis initiation. On the contrary, upon LPAR1 receptor signaling pathway activation, interaction with phosphorylated WDR44 prevents Rab11-RAB3IP-RAB11FIP3 complex formation and cilia growth. Participates in the export of a subset of neosynthesized proteins through a Rab8-Rab10-Rab11-endososomal dependent export route via interaction with WDR44. The polypeptide is Ras-related protein Rab-11A (Bos taurus (Bovine)).